A 485-amino-acid chain; its full sequence is Choline/ethanolamine transporter flvcr2b (485 aa).

At 1-46 (MDTRFNDINRVKMGDESKSVDGEVNDNTYYSKTDAEVNFEHRYTTP) the chain is on the cytoplasmic side. Residues 47–71 (ETRLYKKRWVIVCLFSSYSLCNSYQ) form a helical membrane-spanning segment. Positions 68 and 72 each coordinate choline. Residues 72 to 89 (WIQYGIINNIFMRFYGVD) are Extracellular-facing. Residues 90-117 (SFTIDWMSMIYMLTYIPLIFPVSWLLDK) traverse the membrane as a helical segment. At 118–119 (KG) the chain is on the cytoplasmic side. Residues 120 to 139 (LRVIALVAAALNCAGTWIKV) form a helical membrane-spanning segment. The Extracellular segment spans residues 140 to 146 (ASARPDL). Residues 147 to 175 (FPVTFLGQFTCSVAQVFILGMPSRIASVW) form a helical membrane-spanning segment. Choline-binding residues include glutamine 161 and leucine 165. Topologically, residues 176–180 (FGSDE) are cytoplasmic. The helical transmembrane segment at 181 to 206 (VSTACSIGVFGNQLGIAIGFLVPPIL) threads the bilayer. Over 207 to 211 (VPNVD) the chain is Extracellular. Residues 212-241 (DLDELAAHIRVMFYITAGVATFLFVLVVIV) form a helical membrane-spanning segment. The Cytoplasmic portion of the chain corresponds to 242–277 (FQERPEIPPTLAQAAARRISPESYSYTASILRLLRN). The chain crosses the membrane as a helical span at residues 278–308 (KAFILLVITYGLNVGCFYAVSTLLNRMIIEH). Tyrosine 295 provides a ligand contact to choline. At 309-312 (YPGE) the chain is on the extracellular side. A helical membrane pass occupies residues 313-341 (EVNAGRIGLTIVVAGMVGSLICGIWLDRS). Residues 342-343 (KT) lie on the Cytoplasmic side of the membrane. Residues 344-366 (YKQTTLAVYLMSLMGLVIYAFTL) form a helical membrane-spanning segment. Over 367–369 (DLH) the chain is Extracellular. Residues 370–399 (HLWVVFITAGALGFFMTGYLPLGFEFAVEL) form a helical membrane-spanning segment. The Cytoplasmic segment spans residues 400 to 407 (TYPESEGT). The chain crosses the membrane as a helical span at residues 408–433 (SSGLLNCSAQVFGIIFTICQGKIMDS). Glutamine 417 lines the choline pocket. At 434 to 435 (FG) the chain is on the extracellular side. Residues 436-458 (TLAGNLFLCAFLLIGTIITGCIK) traverse the membrane as a helical segment. The Cytoplasmic portion of the chain corresponds to 459–485 (SDLRRQLANQQAQTADHLDTSPTQTRF).

This sequence belongs to the major facilitator superfamily. Feline leukemia virus subgroup C receptor (TC 2.A.1.28.1) family.

It is found in the cell membrane. Its subcellular location is the mitochondrion membrane. The protein resides in the endoplasmic reticulum membrane. The enzyme catalyses choline(out) = choline(in). It carries out the reaction ethanolamine(in) = ethanolamine(out). The catalysed reaction is heme b(in) = heme b(out). Functionally, choline uniporter that specifically mediates choline uptake at the blood-brain-barrier. Responsible for the majority of choline uptake across the blood-brain-barrier from the circulation into the brain. Choline, a nutrient critical for brain development, is a precursor of phosphatidylcholine, as well as betaine. Also mediates transport of ethanolamine. Choline and ethanolamine transport is not coupled with proton transport and is exclusively driven by the choline gradient across the plasma membrane. Also acts as a heme b transporter. The sequence is that of Choline/ethanolamine transporter flvcr2b from Danio rerio (Zebrafish).